Consider the following 76-residue polypeptide: UPF0291 protein MW2494 (76 aa).

The protein belongs to the UPF0291 family.

The protein localises to the cytoplasm. The protein is UPF0291 protein MW2494 of Staphylococcus aureus (strain MW2).